The primary structure comprises 317 residues: Acetyl-coenzyme A carboxylase carboxyl transferase subunit alpha (317 aa).

The region spanning 40-293 (LEGRVRDAMV…EAVIGDALKE (254 aa)) is the CoA carboxyltransferase C-terminal domain.

The protein belongs to the AccA family. Acetyl-CoA carboxylase is a heterohexamer composed of biotin carboxyl carrier protein (AccB), biotin carboxylase (AccC) and two subunits each of ACCase subunit alpha (AccA) and ACCase subunit beta (AccD).

It localises to the cytoplasm. It catalyses the reaction N(6)-carboxybiotinyl-L-lysyl-[protein] + acetyl-CoA = N(6)-biotinyl-L-lysyl-[protein] + malonyl-CoA. The protein operates within lipid metabolism; malonyl-CoA biosynthesis; malonyl-CoA from acetyl-CoA: step 1/1. Functionally, component of the acetyl coenzyme A carboxylase (ACC) complex. First, biotin carboxylase catalyzes the carboxylation of biotin on its carrier protein (BCCP) and then the CO(2) group is transferred by the carboxyltransferase to acetyl-CoA to form malonyl-CoA. The polypeptide is Acetyl-coenzyme A carboxylase carboxyl transferase subunit alpha (Sinorhizobium medicae (strain WSM419) (Ensifer medicae)).